The chain runs to 283 residues: ATP phosphoribosyltransferase (283 aa).

This sequence belongs to the ATP phosphoribosyltransferase family. Long subfamily. Mg(2+) is required as a cofactor.

Its subcellular location is the cytoplasm. It catalyses the reaction 1-(5-phospho-beta-D-ribosyl)-ATP + diphosphate = 5-phospho-alpha-D-ribose 1-diphosphate + ATP. Its pathway is amino-acid biosynthesis; L-histidine biosynthesis; L-histidine from 5-phospho-alpha-D-ribose 1-diphosphate: step 1/9. Its activity is regulated as follows. Feedback inhibited by histidine. Its function is as follows. Catalyzes the condensation of ATP and 5-phosphoribose 1-diphosphate to form N'-(5'-phosphoribosyl)-ATP (PR-ATP). Has a crucial role in the pathway because the rate of histidine biosynthesis seems to be controlled primarily by regulation of HisG enzymatic activity. This is ATP phosphoribosyltransferase from Bifidobacterium longum subsp. infantis (strain ATCC 15697 / DSM 20088 / JCM 1222 / NCTC 11817 / S12).